We begin with the raw amino-acid sequence, 409 residues long: Rho-GTPase-activating protein BAG7 (409 aa).

Over residues 1 to 26 (MFNMNLLSTPSSEEGSPQNRSSSMSS) the composition is skewed to polar residues. A disordered region spans residues 1 to 32 (MFNMNLLSTPSSEEGSPQNRSSSMSSVEGKKD). The Rho-GAP domain maps to 50 to 257 (VSLEESLKVA…FLILHASDII (208 aa)). The interval 362–409 (KLLGNVGNSSNTGIKDPTERVPRGEHKTKHKQRQSWLRRLTSPSRTQP) is disordered. The span at 377–386 (DPTERVPRGE) shows a compositional bias: basic and acidic residues.

As to quaternary structure, interacts with RHO1.

Acts in signal transduction. Activates RHO1. The sequence is that of Rho-GTPase-activating protein BAG7 (BAG7) from Saccharomyces cerevisiae (strain ATCC 204508 / S288c) (Baker's yeast).